A 327-amino-acid chain; its full sequence is MHPQQLVVSWFSLVLLASPIVAIWELEKNVYVVELDWYPNAPGETVVLTCDTPEEDGITWTSDQSSEVLGSGKTLTIQVKEFGDAGQYTCHKGGEVLSRSLLLLHKKEDGIWSTDILKDQKEPKAKSFLKCEAKDYSGHFTCSWLTAISTNLKFSVKSSRGSSDPRGVTCGAASLSAEKVSMDHREYNKYTVECQEGSACPAAEESLPIEVVMEAVHKLKYENYTSSFFIRDIIKPDPPKNLQLRPLKNSRQVEVSWEYPDTWSTPHSYFSLTFCVQVQGKNKREKKLFTDQTSAKVTCHKDANIRVQARDRYYSSFWSEWASVSCS.

Residues 1 to 22 (MHPQQLVVSWFSLVLLASPIVA) form the signal peptide. The 84-residue stretch at 23–106 (IWELEKNVYV…LSRSLLLLHK (84 aa)) folds into the Ig-like C2-type domain. Residues Cys-50 and Cys-90 are joined by a disulfide bond. A glycan (N-linked (GlcNAc...) asparagine) is linked at Asn-223. Residues 238–327 (PPKNLQLRPL…WSEWASVSCS (90 aa)) form the Fibronectin type-III domain.

Belongs to the IL-12B family. Heterodimer with IL12A; disulfide-linked. The heterodimer is known as interleukin IL-12. Heterodimer with IL23A; disulfide-linked. The heterodimer is known as interleukin IL-23. Also secreted as a monomer. Interacts with NBR1; this interaction promotes IL-12 secretion.

It localises to the secreted. In terms of biological role, cytokine that can act as a growth factor for activated T and NK cells, enhance the lytic activity of NK/lymphokine-activated killer cells, and stimulate the production of IFN-gamma by resting PBMC. Functionally, associates with IL23A to form the IL-23 interleukin, a heterodimeric cytokine which functions in innate and adaptive immunity. IL-23 may constitute with IL-17 an acute response to infection in peripheral tissues. IL-23 binds to a heterodimeric receptor complex composed of IL12RB1 and IL23R, activates the Jak-Stat signaling cascade, stimulates memory rather than naive T-cells and promotes production of pro-inflammatory cytokines. IL-23 induces autoimmune inflammation and thus may be responsible for autoimmune inflammatory diseases and may be important for tumorigenesis. The polypeptide is Interleukin-12 subunit beta (IL12B) (Capra hircus (Goat)).